Consider the following 102-residue polypeptide: NADH-quinone oxidoreductase subunit K 1 (102 aa).

A run of 3 helical transmembrane segments spans residues 6–26 (LNAY…GVLV), 31–51 (LAIL…FVAF), and 65–85 (FLVI…TVLL).

This sequence belongs to the complex I subunit 4L family. In terms of assembly, NDH-1 is composed of 14 different subunits. Subunits NuoA, H, J, K, L, M, N constitute the membrane sector of the complex.

It localises to the cell membrane. It carries out the reaction a quinone + NADH + 5 H(+)(in) = a quinol + NAD(+) + 4 H(+)(out). Functionally, NDH-1 shuttles electrons from NADH, via FMN and iron-sulfur (Fe-S) centers, to quinones in the respiratory chain. The immediate electron acceptor for the enzyme in this species is believed to be a menaquinone. Couples the redox reaction to proton translocation (for every two electrons transferred, four hydrogen ions are translocated across the cytoplasmic membrane), and thus conserves the redox energy in a proton gradient. This is NADH-quinone oxidoreductase subunit K 1 from Symbiobacterium thermophilum (strain DSM 24528 / JCM 14929 / IAM 14863 / T).